A 206-amino-acid chain; its full sequence is 2,3-bisphosphoglycerate-dependent phosphoglycerate mutase (206 aa).

Substrate is bound by residues 9-16, 22-23, arginine 61, 88-91, lysine 99, 115-116, and 159-160; these read RHGQSEWN, TG, ERDY, RR, and GN. The Tele-phosphohistidine intermediate role is filled by histidine 10. The Proton donor/acceptor role is filled by glutamate 88.

It belongs to the phosphoglycerate mutase family. BPG-dependent PGAM subfamily. As to quaternary structure, homodimer.

The enzyme catalyses (2R)-2-phosphoglycerate = (2R)-3-phosphoglycerate. Its pathway is carbohydrate degradation; glycolysis; pyruvate from D-glyceraldehyde 3-phosphate: step 3/5. Functionally, catalyzes the interconversion of 2-phosphoglycerate and 3-phosphoglycerate. This Azorhizobium caulinodans (strain ATCC 43989 / DSM 5975 / JCM 20966 / LMG 6465 / NBRC 14845 / NCIMB 13405 / ORS 571) protein is 2,3-bisphosphoglycerate-dependent phosphoglycerate mutase.